Here is a 445-residue protein sequence, read N- to C-terminus: Bifunctional protein GlmU (445 aa).

The pyrophosphorylase stretch occupies residues 1-218 (MRALVLAAGK…LLEITGVNTR (218 aa)). UDP-N-acetyl-alpha-D-glucosamine is bound by residues 6-9 (LAAG), Lys20, Gln69, 74-75 (GT), 96-98 (YGD), Gly134, Glu147, Asn162, and Asn216. A Mg(2+)-binding site is contributed by Asp98. Asn216 is a Mg(2+) binding site. Residues 219-239 (KTLVWLEEQLRMRKIEELLEN) form a linker region. The tract at residues 240–445 (GVTILDPATT…GWVLKKRKEE (206 aa)) is N-acetyltransferase. Positions 321 and 339 each coordinate UDP-N-acetyl-alpha-D-glucosamine. His351 serves as the catalytic Proton acceptor. 2 residues coordinate UDP-N-acetyl-alpha-D-glucosamine: Tyr354 and Asn365. Acetyl-CoA contacts are provided by residues Ala368, 374–375 (NY), Ser393, Ala411, and Arg428.

In the N-terminal section; belongs to the N-acetylglucosamine-1-phosphate uridyltransferase family. This sequence in the C-terminal section; belongs to the transferase hexapeptide repeat family. In terms of assembly, homotrimer. The cofactor is Mg(2+).

The protein resides in the cytoplasm. It carries out the reaction alpha-D-glucosamine 1-phosphate + acetyl-CoA = N-acetyl-alpha-D-glucosamine 1-phosphate + CoA + H(+). The catalysed reaction is N-acetyl-alpha-D-glucosamine 1-phosphate + UTP + H(+) = UDP-N-acetyl-alpha-D-glucosamine + diphosphate. It functions in the pathway nucleotide-sugar biosynthesis; UDP-N-acetyl-alpha-D-glucosamine biosynthesis; N-acetyl-alpha-D-glucosamine 1-phosphate from alpha-D-glucosamine 6-phosphate (route II): step 2/2. The protein operates within nucleotide-sugar biosynthesis; UDP-N-acetyl-alpha-D-glucosamine biosynthesis; UDP-N-acetyl-alpha-D-glucosamine from N-acetyl-alpha-D-glucosamine 1-phosphate: step 1/1. It participates in bacterial outer membrane biogenesis; LPS lipid A biosynthesis. Catalyzes the last two sequential reactions in the de novo biosynthetic pathway for UDP-N-acetylglucosamine (UDP-GlcNAc). The C-terminal domain catalyzes the transfer of acetyl group from acetyl coenzyme A to glucosamine-1-phosphate (GlcN-1-P) to produce N-acetylglucosamine-1-phosphate (GlcNAc-1-P), which is converted into UDP-GlcNAc by the transfer of uridine 5-monophosphate (from uridine 5-triphosphate), a reaction catalyzed by the N-terminal domain. This is Bifunctional protein GlmU from Thermotoga maritima (strain ATCC 43589 / DSM 3109 / JCM 10099 / NBRC 100826 / MSB8).